Reading from the N-terminus, the 122-residue chain is Large ribosomal subunit protein uL14 (122 aa).

The protein belongs to the universal ribosomal protein uL14 family. Part of the 50S ribosomal subunit. Forms a cluster with proteins L3 and L19. In the 70S ribosome, L14 and L19 interact and together make contacts with the 16S rRNA in bridges B5 and B8.

In terms of biological role, binds to 23S rRNA. Forms part of two intersubunit bridges in the 70S ribosome. This Lacticaseibacillus casei (strain BL23) (Lactobacillus casei) protein is Large ribosomal subunit protein uL14.